The chain runs to 730 residues: Elongation factor 2 (730 aa).

The tr-type G domain maps to 19-228 (TKIRNIGIVA…TGVSFKDVYD (210 aa)). GTP is bound by residues 28–35 (AHIDHGKT), 94–98 (DTPGH), and 148–151 (NKVD). The residue at position 596 (H596) is a Diphthamide.

It belongs to the TRAFAC class translation factor GTPase superfamily. Classic translation factor GTPase family. EF-G/EF-2 subfamily.

It is found in the cytoplasm. Catalyzes the GTP-dependent ribosomal translocation step during translation elongation. During this step, the ribosome changes from the pre-translocational (PRE) to the post-translocational (POST) state as the newly formed A-site-bound peptidyl-tRNA and P-site-bound deacylated tRNA move to the P and E sites, respectively. Catalyzes the coordinated movement of the two tRNA molecules, the mRNA and conformational changes in the ribosome. This Methanosarcina barkeri (strain Fusaro / DSM 804) protein is Elongation factor 2.